A 113-amino-acid chain; its full sequence is Large ribosomal subunit protein eL31 (113 aa).

This sequence belongs to the eukaryotic ribosomal protein eL31 family.

The polypeptide is Large ribosomal subunit protein eL31 (RPL31) (Candida glabrata (strain ATCC 2001 / BCRC 20586 / JCM 3761 / NBRC 0622 / NRRL Y-65 / CBS 138) (Yeast)).